A 159-amino-acid chain; its full sequence is SsrA-binding protein (159 aa).

The segment covering 131–148 (YDKRQTLREKQDRREAER) has biased composition (basic and acidic residues). A disordered region spans residues 131–159 (YDKRQTLREKQDRREAERTISAIKRKQRA).

It belongs to the SmpB family.

The protein localises to the cytoplasm. Functionally, required for rescue of stalled ribosomes mediated by trans-translation. Binds to transfer-messenger RNA (tmRNA), required for stable association of tmRNA with ribosomes. tmRNA and SmpB together mimic tRNA shape, replacing the anticodon stem-loop with SmpB. tmRNA is encoded by the ssrA gene; the 2 termini fold to resemble tRNA(Ala) and it encodes a 'tag peptide', a short internal open reading frame. During trans-translation Ala-aminoacylated tmRNA acts like a tRNA, entering the A-site of stalled ribosomes, displacing the stalled mRNA. The ribosome then switches to translate the ORF on the tmRNA; the nascent peptide is terminated with the 'tag peptide' encoded by the tmRNA and targeted for degradation. The ribosome is freed to recommence translation, which seems to be the essential function of trans-translation. The sequence is that of SsrA-binding protein from Streptomyces coelicolor (strain ATCC BAA-471 / A3(2) / M145).